We begin with the raw amino-acid sequence, 562 residues long: RNA N(6)-adenosine-methyltransferase METTL16 (562 aa).

Positions 17–20 (PPDF) are RNA-binding. 6 residues coordinate S-adenosyl-L-methionine: arginine 82, glycine 110, serine 114, glutamate 133, threonine 164, and asparagine 184. The K-loop stretch occupies residues 163-167 (KTLLM). RNA-binding stretches follow at residues 199 to 211 (SRNP…SSVN), 250 to 254 (GKKCS), and 277 to 283 (QGRTMRW). A VCR 1 region spans residues 289-400 (FYDDVTVPSP…QLREVPRAPE (112 aa)). Serine 329 carries the phosphoserine modification. Residues 402-413 (VIQALEEKKPTP) show a composition bias toward basic and acidic residues. The interval 402 to 498 (VIQALEEKKP…DQEASEQFGS (97 aa)) is disordered. A compositionally biased stretch (acidic residues) spans 458-467 (ENPEPTEDER). Phosphothreonine is present on threonine 463. Over residues 480 to 496 (CQGSSNGAQDQEASEQF) the composition is skewed to polar residues. Positions 514–562 (YLFKCLINVKKEVDDALVEMHWVEGQNRDLMNQLCTYIRNQIFRLVAVN) are VCR 2.

It belongs to the methyltransferase superfamily. METTL16/RlmF family. In terms of assembly, interacts with MEPCE. Interacts with LARP7.

The protein resides in the nucleus. It is found in the cytoplasm. It catalyses the reaction adenosine in U6 snRNA + S-adenosyl-L-methionine = N(6)-methyladenosine in U6 snRNA + S-adenosyl-L-homocysteine + H(+). It carries out the reaction an adenosine in mRNA + S-adenosyl-L-methionine = an N(6)-methyladenosine in mRNA + S-adenosyl-L-homocysteine + H(+). With respect to regulation, methyltransferase activity is autoinhibited by the K-loop region that blocks S-adenosyl-L-methionine-binding. Upon activation, K-loop changes conformation, allowing S-adenosyl-L-methionine-binding and subsequent methyltransferase activity. mRNA N6-adenosine-methyltransferase activity is inhibited by zinc. Functionally, RNA N6-methyltransferase that methylates adenosine residues at the N(6) position of a subset of RNAs and is involved in S-adenosyl-L-methionine homeostasis by regulating expression of MAT2A transcripts. Able to N6-methylate a subset of mRNAs and U6 small nuclear RNAs (U6 snRNAs). In contrast to the METTL3-METTL14 heterodimer, only able to methylate a limited number of RNAs: requires both a 5'UACAGAGAA-3' nonamer sequence and a specific RNA structure. Plays a key role in S-adenosyl-L-methionine homeostasis by mediating N6-methylation of MAT2A mRNAs, altering splicing of MAT2A transcripts: in presence of S-adenosyl-L-methionine, binds the 3'-UTR region of MAT2A mRNA and specifically N6-methylates the first hairpin of MAT2A mRNA, preventing recognition of their 3'-splice site by U2AF1/U2AF35, thereby inhibiting splicing and protein production of S-adenosylmethionine synthase. In S-adenosyl-L-methionine-limiting conditions, binds the 3'-UTR region of MAT2A mRNA but stalls due to the lack of a methyl donor, preventing N6-methylation and promoting expression of MAT2A. In addition to mRNAs, also able to mediate N6-methylation of U6 small nuclear RNA (U6 snRNA): specifically N6-methylates adenine in position 43 of U6 snRNAs. Also able to bind various lncRNAs, such as 7SK snRNA (7SK RNA) or 7SL RNA. Specifically binds the 3'-end of the MALAT1 long non-coding RNA. This chain is RNA N(6)-adenosine-methyltransferase METTL16, found in Homo sapiens (Human).